The following is a 432-amino-acid chain: uncharacterized protein (432 aa).

A run of 13 helical transmembrane segments spans residues 7–27, 29–49, 68–88, 124–144, 156–176, 196–216, 241–261, 266–286, 291–311, 326–346, 358–378, 379–399, and 412–432; these read FIGL…PDIY, GIVI…PLPV, EALT…FMLA, FLSM…IALG, FLLL…IIGS, VGFP…YIYF, LVIF…SEIF, FDSV…LVEV, KIDW…GVIV, ILGN…TIIL, IIVP…LILA, VGMS…NAIV, and IGMI…ILYL.

This sequence belongs to the CitM (TC 2.A.11) transporter family.

The protein localises to the cell membrane. This is an uncharacterized protein from Methanocaldococcus jannaschii (strain ATCC 43067 / DSM 2661 / JAL-1 / JCM 10045 / NBRC 100440) (Methanococcus jannaschii).